A 372-amino-acid polypeptide reads, in one-letter code: tRNA pseudouridine synthase D (372 aa).

Residue Asp-85 is the Nucleophile of the active site. The region spanning 160–330 (GFANYFGYQR…MQGSRRFMWG (171 aa)) is the TRUD domain.

The protein belongs to the pseudouridine synthase TruD family.

The catalysed reaction is uridine(13) in tRNA = pseudouridine(13) in tRNA. Responsible for synthesis of pseudouridine from uracil-13 in transfer RNAs. The polypeptide is tRNA pseudouridine synthase D (Campylobacter jejuni subsp. jejuni serotype O:2 (strain ATCC 700819 / NCTC 11168)).